A 227-amino-acid chain; its full sequence is Cytochrome c oxidase subunit 2 (227 aa).

Topologically, residues 1–14 (MAHSFQLGFQDATS) are mitochondrial intermembrane. Residues 15-45 (PIMEELLHFHDHTLMIVFLISSLVLYIITLM) form a helical membrane-spanning segment. The Mitochondrial matrix portion of the chain corresponds to 46 to 59 (LTTKLTHTSTMDAQ). Residues 60–87 (EVETVWTILPAIILILIALPSLRILYLM) traverse the membrane as a helical segment. Over 88–227 (DEINTPSLTV…HFENWSTSMI (140 aa)) the chain is Mitochondrial intermembrane. Cu cation is bound by residues His161, Cys196, Glu198, Cys200, His204, and Met207. A Mg(2+)-binding site is contributed by Glu198.

Belongs to the cytochrome c oxidase subunit 2 family. As to quaternary structure, component of the cytochrome c oxidase (complex IV, CIV), a multisubunit enzyme composed of 14 subunits. The complex is composed of a catalytic core of 3 subunits MT-CO1, MT-CO2 and MT-CO3, encoded in the mitochondrial DNA, and 11 supernumerary subunits COX4I, COX5A, COX5B, COX6A, COX6B, COX6C, COX7A, COX7B, COX7C, COX8 and NDUFA4, which are encoded in the nuclear genome. The complex exists as a monomer or a dimer and forms supercomplexes (SCs) in the inner mitochondrial membrane with NADH-ubiquinone oxidoreductase (complex I, CI) and ubiquinol-cytochrome c oxidoreductase (cytochrome b-c1 complex, complex III, CIII), resulting in different assemblies (supercomplex SCI(1)III(2)IV(1) and megacomplex MCI(2)III(2)IV(2)). Found in a complex with TMEM177, COA6, COX18, COX20, SCO1 and SCO2. Interacts with TMEM177 in a COX20-dependent manner. Interacts with COX20. Interacts with COX16. Cu cation is required as a cofactor.

It localises to the mitochondrion inner membrane. The enzyme catalyses 4 Fe(II)-[cytochrome c] + O2 + 8 H(+)(in) = 4 Fe(III)-[cytochrome c] + 2 H2O + 4 H(+)(out). In terms of biological role, component of the cytochrome c oxidase, the last enzyme in the mitochondrial electron transport chain which drives oxidative phosphorylation. The respiratory chain contains 3 multisubunit complexes succinate dehydrogenase (complex II, CII), ubiquinol-cytochrome c oxidoreductase (cytochrome b-c1 complex, complex III, CIII) and cytochrome c oxidase (complex IV, CIV), that cooperate to transfer electrons derived from NADH and succinate to molecular oxygen, creating an electrochemical gradient over the inner membrane that drives transmembrane transport and the ATP synthase. Cytochrome c oxidase is the component of the respiratory chain that catalyzes the reduction of oxygen to water. Electrons originating from reduced cytochrome c in the intermembrane space (IMS) are transferred via the dinuclear copper A center (CU(A)) of subunit 2 and heme A of subunit 1 to the active site in subunit 1, a binuclear center (BNC) formed by heme A3 and copper B (CU(B)). The BNC reduces molecular oxygen to 2 water molecules using 4 electrons from cytochrome c in the IMS and 4 protons from the mitochondrial matrix. The polypeptide is Cytochrome c oxidase subunit 2 (MT-CO2) (Cephalopachus bancanus (Western tarsier)).